The sequence spans 162 residues: F protein (162 aa).

Residues 1-23 are disordered; the sequence is MSTNPKPQRKKPNVTPTVAHRTS. Over residues 14–23 the composition is skewed to polar residues; the sequence is VTPTVAHRTS.

The protein localises to the host cytoplasm. It localises to the host perinuclear region. Functionally, contributes to the RIGI-mediated inhibition of type I interferon production. This chain is F protein, found in Homo sapiens (Human).